The following is a 555-amino-acid chain: Solute carrier family 22 member 2 (555 aa).

Residues 1–21 are Cytoplasmic-facing; that stretch reads MPTTVDDVLEHGGEFHFFQKQ. A helical membrane pass occupies residues 22-42; it reads MFFLLALLSATFTPIYVGIVF. The Extracellular segment spans residues 43–150; the sequence is LGFTPDHRCR…LVCANSWMLD (108 aa). Asn72 is a glycosylation site (N-linked (GlcNAc...) asparagine). The helical transmembrane segment at 151 to 171 threads the bilayer; the sequence is LFQASVNVGFFFGSVSIGYIA. Topologically, residues 172–177 are cytoplasmic; the sequence is DRFGRK. Residues 178–198 traverse the membrane as a helical segment; sequence LCLLTTVLINAAAGVLMAISP. The Extracellular portion of the chain corresponds to 199 to 210; the sequence is TYTWMLIFRLIQ. A helical transmembrane segment spans residues 211 to 231; the sequence is GLVSKAGWLIGYILITEFVGR. Residues 232–238 are Cytoplasmic-facing; sequence RYRRTVG. A helical transmembrane segment spans residues 239–259; the sequence is IFYQVAYTVGLLVLAGVAYAL. The Extracellular segment spans residues 260–263; it reads PHWR. A helical transmembrane segment spans residues 264 to 284; the sequence is WLQFTVTLPNFFFLLYYWCIP. The Proline-rich sequence motif lies at 284–288; that stretch reads PESPR. At 285 to 348 the chain is on the cytoplasmic side; sequence ESPRWLISQN…VRTPQIRKHT (64 aa). A helical transmembrane segment spans residues 349–369; it reads MILMYNWFTSSVLYQGLIMHM. The Extracellular portion of the chain corresponds to 370–375; the sequence is GLAGDN. A helical transmembrane segment spans residues 376 to 396; that stretch reads IYLDFFYSALVEFPAAFMIIV. Over 397 to 404 the chain is Cytoplasmic; it reads TIDRIGRR. Residues 405–425 form a helical membrane-spanning segment; it reads YPWAASNMVAGAACLASVFIP. The Extracellular portion of the chain corresponds to 426 to 432; the sequence is GDLQWLK. Residues 433-453 form a helical membrane-spanning segment; that stretch reads IIISCLGRMGITMAYEIVRLV. Residues 454 to 464 are Cytoplasmic-facing; that stretch reads NAELYPTFIRN. The chain crosses the membrane as a helical span at residues 465–485; sequence LGVHICSSMCDIGGIITPFLV. At 486-494 the chain is on the extracellular side; sequence YRLTNIWLE. A helical membrane pass occupies residues 495–515; sequence LPLMVFGVLGLVAGGLVLLLP. The Cytoplasmic portion of the chain corresponds to 516-555; it reads ETKGKALPETIEEAENMQRPRKNKEKMIYLQVQKLDIPLN.

Belongs to the major facilitator (TC 2.A.1) superfamily. Organic cation transporter (TC 2.A.1.19) family. Post-translationally, tyrosine phosphorylated.

The protein localises to the basolateral cell membrane. It localises to the basal cell membrane. Its subcellular location is the apical cell membrane. It catalyses the reaction (R)-noradrenaline(out) = (R)-noradrenaline(in). The catalysed reaction is (R)-adrenaline(out) = (R)-adrenaline(in). The enzyme catalyses serotonin(out) = serotonin(in). It carries out the reaction dopamine(out) = dopamine(in). It catalyses the reaction histamine(out) = histamine(in). The catalysed reaction is thiamine(in) = thiamine(out). The enzyme catalyses creatinine(in) = creatinine(out). It carries out the reaction 1-methylnicotinamide(out) = 1-methylnicotinamide(in). It catalyses the reaction guanidine(out) = guanidine(in). The catalysed reaction is choline(out) = choline(in). The enzyme catalyses agmatine(out) = agmatine(in). It carries out the reaction putrescine(out) = putrescine(in). It catalyses the reaction spermidine(in) = spermidine(out). The catalysed reaction is tyramine(in) = tyramine(out). The enzyme catalyses L-histidyl-L-proline diketopiperazine(in) = L-histidyl-L-proline diketopiperazine(out). It carries out the reaction (R)-salsolinol(in) = (R)-salsolinol(out). It catalyses the reaction N-methyl-(R)-salsolinol(in) = N-methyl-(R)-salsolinol(out). The catalysed reaction is acetylcholine(in) = acetylcholine(out). The enzyme catalyses prostaglandin F2alpha(out) = prostaglandin F2alpha(in). It carries out the reaction prostaglandin E2(out) = prostaglandin E2(in). Its activity is regulated as follows. Tyrosine phosphorylation of the transporter leads to activation of the transport activity. Inhibited by cGMP, most likely through a cGMP-binding protein that interacts with OCT2. Electrogenic voltage-dependent transporter that mediates the transport of a variety of organic cations such as endogenous bioactive amines, cationic drugs and xenobiotics. Functions as a Na(+)-independent, bidirectional uniporter. Cation cellular uptake or release is driven by the electrochemical potential, i.e. membrane potential and concentration gradient. However, may also engage electroneutral cation exchange when saturating concentrations of cation substrates are reached. Predominantly expressed at the basolateral membrane of hepatocytes and proximal tubules and involved in the uptake and disposition of cationic compounds by hepatic and renal clearance from the blood flow. Implicated in monoamine neurotransmitters uptake such as histamine, dopamine, adrenaline/epinephrine, noradrenaline/norepinephrine, serotonin and tyramine, thereby supporting a physiological role in the central nervous system by regulating interstitial concentrations of neurotransmitters. Also capable of transporting dopaminergic neuromodulators cyclo(his-pro), salsolinol and N-methyl-salsolinol, thereby involved in the maintenance of dopaminergic cell integrity in the central nervous system. Mediates the bidirectional transport of acetylcholine (ACh) at the apical membrane of ciliated cell in airway epithelium, thereby playing a role in luminal release of ACh from bronchial epithelium. Also transports guanidine and endogenous monoamines such as vitamin B1/thiamine, creatinine and N-1-methylnicotinamide (NMN). Mediates the uptake and efflux of quaternary ammonium compound choline. Mediates the bidirectional transport of polyamine agmatine and the uptake of polyamines putrescine and spermidine. Able to transport non-amine endogenous compounds such as prostaglandin E2 (PGE2) and prostaglandin F2-alpha (PGF2-alpha). Also involved in the uptake of xenobiotic 4-(4-(dimethylamino)styryl)-N-methylpyridinium (ASP). May contribute to regulate the transport of organic compounds in testis across the blood-testis-barrier. The chain is Solute carrier family 22 member 2 (SLC22A2) from Pongo abelii (Sumatran orangutan).